The chain runs to 351 residues: Photosystem II D2 protein (351 aa).

The helical transmembrane segment at 39-59 threads the bilayer; it reads CAYLAVGGWLTGTTFVTSWYT. H116 serves as a coordination point for chlorophyll a. The helical transmembrane segment at 123-139 threads the bilayer; the sequence is GFCLRQFEIARLVGLRP. Residues Q128 and N141 each contribute to the pheophytin a site. A helical transmembrane segment spans residues 151–164; sequence VFVSVFLMYPLGQA. H196 is a chlorophyll a binding site. The chain crosses the membrane as a helical span at residues 206 to 226; the sequence is GALLCAIHGATVQNTLFEDGD. A plastoquinone-binding residues include H213 and F260. H213 lines the Fe cation pocket. H267 is a Fe cation binding site. Residues 277–293 traverse the membrane as a helical segment; the sequence is GLWTSAFGIVGLALNLR.

Belongs to the reaction center PufL/M/PsbA/D family. PSII is composed of 1 copy each of membrane proteins PsbA, PsbB, PsbC, PsbD, PsbE, PsbF, PsbH, PsbI, PsbJ, PsbK, PsbL, PsbM, PsbT, PsbX, PsbY, PsbZ, Psb30/Ycf12, at least 3 peripheral proteins of the oxygen-evolving complex and a large number of cofactors. It forms dimeric complexes. It depends on The D1/D2 heterodimer binds P680, chlorophylls that are the primary electron donor of PSII, and subsequent electron acceptors. It shares a non-heme iron and each subunit binds pheophytin, quinone, additional chlorophylls, carotenoids and lipids. There is also a Cl(-1) ion associated with D1 and D2, which is required for oxygen evolution. The PSII complex binds additional chlorophylls, carotenoids and specific lipids. as a cofactor.

It localises to the plastid. The protein resides in the chloroplast thylakoid membrane. The catalysed reaction is 2 a plastoquinone + 4 hnu + 2 H2O = 2 a plastoquinol + O2. Its function is as follows. Photosystem II (PSII) is a light-driven water:plastoquinone oxidoreductase that uses light energy to abstract electrons from H(2)O, generating O(2) and a proton gradient subsequently used for ATP formation. It consists of a core antenna complex that captures photons, and an electron transfer chain that converts photonic excitation into a charge separation. The D1/D2 (PsbA/PsbD) reaction center heterodimer binds P680, the primary electron donor of PSII as well as several subsequent electron acceptors. D2 is needed for assembly of a stable PSII complex. In Porphyra purpurea (Red seaweed), this protein is Photosystem II D2 protein.